A 348-amino-acid polypeptide reads, in one-letter code: GTPase Obg (348 aa).

The Obg domain maps to 1–159 (MKFLDQARIY…MTLWLRLKLI (159 aa)). An OBG-type G domain is found at 160–327 (ADAGLVGLPN…TLQSLLAAID (168 aa)). GTP is bound by residues 166–173 (GLPNAGKS), 191–195 (FTTLH), 212–215 (DIPG), 279–282 (SKID), and 308–310 (SAA). Positions 173 and 193 each coordinate Mg(2+).

The protein belongs to the TRAFAC class OBG-HflX-like GTPase superfamily. OBG GTPase family. Monomer. It depends on Mg(2+) as a cofactor.

The protein resides in the cytoplasm. An essential GTPase which binds GTP, GDP and possibly (p)ppGpp with moderate affinity, with high nucleotide exchange rates and a fairly low GTP hydrolysis rate. Plays a role in control of the cell cycle, stress response, ribosome biogenesis and in those bacteria that undergo differentiation, in morphogenesis control. The polypeptide is GTPase Obg (Beijerinckia indica subsp. indica (strain ATCC 9039 / DSM 1715 / NCIMB 8712)).